The chain runs to 388 residues: Succinate--CoA ligase [ADP-forming] subunit beta (388 aa).

In terms of domain architecture, ATP-grasp spans 9–244 (KEILRKFGVA…PDEEDPKETQ (236 aa)). Residues K46, 53–55 (GRG), E99, C102, and E107 contribute to the ATP site. Residues N199 and D213 each coordinate Mg(2+). Substrate is bound by residues N264 and 321-323 (GIM).

Belongs to the succinate/malate CoA ligase beta subunit family. As to quaternary structure, heterotetramer of two alpha and two beta subunits. Requires Mg(2+) as cofactor.

It carries out the reaction succinate + ATP + CoA = succinyl-CoA + ADP + phosphate. The catalysed reaction is GTP + succinate + CoA = succinyl-CoA + GDP + phosphate. Its pathway is carbohydrate metabolism; tricarboxylic acid cycle; succinate from succinyl-CoA (ligase route): step 1/1. Its function is as follows. Succinyl-CoA synthetase functions in the citric acid cycle (TCA), coupling the hydrolysis of succinyl-CoA to the synthesis of either ATP or GTP and thus represents the only step of substrate-level phosphorylation in the TCA. The beta subunit provides nucleotide specificity of the enzyme and binds the substrate succinate, while the binding sites for coenzyme A and phosphate are found in the alpha subunit. The protein is Succinate--CoA ligase [ADP-forming] subunit beta of Anaeromyxobacter dehalogenans (strain 2CP-1 / ATCC BAA-258).